We begin with the raw amino-acid sequence, 513 residues long: Varicidin biosynthesis cluster-specific transcription factor (513 aa).

A DNA-binding region (zn(2)-C6 fungal-type) is located at residues Cys16–Cys54. Disordered stretches follow at residues Arg58–Asn92 and Val97–Lys116. Low complexity predominate over residues Ser67–Ser76. The segment covering Lys77–Asn92 has biased composition (polar residues).

It localises to the nucleus. Its function is as follows. Transcription factor that regulates the expression of the gene cluster that mediates the biosynthesis of varicidin A, an antifungal natural product containing a cis-octahydrodecalin core. In Talaromyces variabilis (Penicillium variabile), this protein is Varicidin biosynthesis cluster-specific transcription factor.